A 145-amino-acid chain; its full sequence is Cytochrome c-type biogenesis protein CcmE (145 aa).

The Cytoplasmic segment spans residues 1 to 7 (MKAKHQR). The helical; Signal-anchor for type II membrane protein transmembrane segment at 8 to 28 (LILAVAALCGVAGAGVLAASA) threads the bilayer. At 29 to 145 (LRDEAAYFRT…PKNMKAAVEG (117 aa)) the chain is on the periplasmic side. Histidine 123 and tyrosine 127 together coordinate heme.

Belongs to the CcmE/CycJ family.

It localises to the cell inner membrane. Functionally, heme chaperone required for the biogenesis of c-type cytochromes. Transiently binds heme delivered by CcmC and transfers the heme to apo-cytochromes in a process facilitated by CcmF and CcmH. This chain is Cytochrome c-type biogenesis protein CcmE, found in Sphingopyxis alaskensis (strain DSM 13593 / LMG 18877 / RB2256) (Sphingomonas alaskensis).